We begin with the raw amino-acid sequence, 403 residues long: 4,4'-dithiodibutanoate disulfide reductase (403 aa).

Q103 contributes to the FMN binding site. The active-site Proton donor is the Y173. 348 to 349 (AR) provides a ligand contact to FMN.

Belongs to the NADH:flavin oxidoreductase/NADH oxidase family. Requires FMN as cofactor.

It carries out the reaction 2 4-sulfanylbutanoate + NAD(+) = 4,4'-disulfanyldibutanoate + NADH + H(+). Inactivated by cobalt, nickel and zinc ions. Its function is as follows. Involved in the degradation of the organic disulfide 4,4'-dithiodibutyric acid (DTDB). Catalyzes the initial cleavage of DTDB into 2 molecules of 4-mercaptobutyric acid (4MB). Low activities are observed with other disulfide compounds, such as 3,3'-dithiodipropionic acid DTDP, 3,3'-thiodipropionic acid TDP and DTNB. This chain is 4,4'-dithiodibutanoate disulfide reductase, found in Rhodococcus erythropolis (Arthrobacter picolinophilus).